Reading from the N-terminus, the 336-residue chain is Ornithine carbamoyltransferase, catabolic (336 aa).

Carbamoyl phosphate contacts are provided by residues 62–65 (STRT), Gln-89, Arg-113, and 140–143 (HPTQ). L-ornithine is bound by residues Asn-172, Asp-236, and 240 to 241 (SM). Residues 277 to 278 (CL) and Arg-322 contribute to the carbamoyl phosphate site.

Belongs to the aspartate/ornithine carbamoyltransferase superfamily. OTCase family.

Its subcellular location is the cytoplasm. The catalysed reaction is carbamoyl phosphate + L-ornithine = L-citrulline + phosphate + H(+). Its pathway is amino-acid degradation; L-arginine degradation via ADI pathway; carbamoyl phosphate from L-arginine: step 2/2. Functionally, reversibly catalyzes the transfer of the carbamoyl group from carbamoyl phosphate (CP) to the N(epsilon) atom of ornithine (ORN) to produce L-citrulline. This is Ornithine carbamoyltransferase, catabolic from Staphylococcus aureus (strain MSSA476).